The chain runs to 231 residues: Orotidine 5'-phosphate decarboxylase (231 aa).

Residues Asp12, Lys34, 61-70 (DMKLLDIDNT), Thr116, Arg177, Gln186, Gly206, and Arg207 contribute to the substrate site. Lys63 serves as the catalytic Proton donor.

It belongs to the OMP decarboxylase family. Type 1 subfamily. In terms of assembly, homodimer.

The enzyme catalyses orotidine 5'-phosphate + H(+) = UMP + CO2. Its pathway is pyrimidine metabolism; UMP biosynthesis via de novo pathway; UMP from orotate: step 2/2. Catalyzes the decarboxylation of orotidine 5'-monophosphate (OMP) to uridine 5'-monophosphate (UMP). This Allorhizobium ampelinum (strain ATCC BAA-846 / DSM 112012 / S4) (Agrobacterium vitis (strain S4)) protein is Orotidine 5'-phosphate decarboxylase.